The following is a 146-amino-acid chain: Prolactin-inducible protein homolog (146 aa).

Positions 1-26 (MQGLSFTSTAATFFLVLCLQLGINEG) are cleaved as a signal peptide. Gln27 is modified (pyrrolidone carboxylic acid). The N-linked (GlcNAc...) asparagine glycan is linked to Asn29. 2 disulfides stabilise this stretch: Cys65/Cys91 and Cys89/Cys123.

It belongs to the PIP family. Monomer. Interacts with AZGP1.

Its subcellular location is the secreted. The chain is Prolactin-inducible protein homolog (Pip) from Rattus norvegicus (Rat).